The sequence spans 782 residues: E3 ubiquitin-protein ligase SopA (782 aa).

The disordered stretch occupies residues 137-171 (VSVSANNRPTVSEGRTPPVSPSLSLQATSSPSSPA). Residues 157-171 (PSLSLQATSSPSSPA) are compositionally biased toward low complexity. Cysteine 753 acts as the Glycyl thioester intermediate in catalysis.

The protein belongs to the SopA E3 ligase family. In terms of processing, ubiquitinated in the presence of host E1 ubiquitin-activating enzyme, E2 ubiquitin-conjugating enzyme and ubiquitin.

Its subcellular location is the secreted. It is found in the host cell. It catalyses the reaction S-ubiquitinyl-[E2 ubiquitin-conjugating enzyme]-L-cysteine + [acceptor protein]-L-lysine = [E2 ubiquitin-conjugating enzyme]-L-cysteine + N(6)-ubiquitinyl-[acceptor protein]-L-lysine.. Functionally, effector proteins function to alter host cell physiology and promote bacterial survival in host tissues. This protein is an E3 ubiquitin ligase that interferes with host's ubiquitination pathway. For instance, prevents host innate immune response by ubiquitinating and thus sending to degradation host E3 ubiquitin ligases TRIM56 and TRIM65. The polypeptide is E3 ubiquitin-protein ligase SopA (sopA) (Salmonella typhimurium (strain 14028s / SGSC 2262)).